A 185-amino-acid chain; its full sequence is Elongation factor P (185 aa).

The protein belongs to the elongation factor P family.

Its subcellular location is the cytoplasm. It functions in the pathway protein biosynthesis; polypeptide chain elongation. In terms of biological role, involved in peptide bond synthesis. Stimulates efficient translation and peptide-bond synthesis on native or reconstituted 70S ribosomes in vitro. Probably functions indirectly by altering the affinity of the ribosome for aminoacyl-tRNA, thus increasing their reactivity as acceptors for peptidyl transferase. The polypeptide is Elongation factor P (Carboxydothermus hydrogenoformans (strain ATCC BAA-161 / DSM 6008 / Z-2901)).